The sequence spans 618 residues: Protein polyglycylase TTLL10 (618 aa).

Residues 1 to 76 (MGSSQEEGLP…GLLLGDGKPS (76 aa)) are disordered. The span at 57–74 (ATGPPAALLEGLLLGDGK) shows a compositional bias: low complexity. A TTL domain is found at 82-479 (PGPFFYIGGN…TFQKSLRGQK (398 aa)). ATP is bound by residues Lys240, 246 to 247 (QG), 289 to 292 (QRYI), 302 to 304 (KFD), and 345 to 346 (TN). An a protein-binding site is contributed by Gln246. Residues Asp425, Glu438, and Asn440 each coordinate Mg(2+). The segment at 503 to 618 (LGGSCSLRRR…PATLPAFRDL (116 aa)) is disordered. Over residues 539-557 (PVPPPLAPQRPQLPGPSPD) the composition is skewed to pro residues. Basic and acidic residues predominate over residues 585–594 (AKEEREEPEN).

Requires Mg(2+) as cofactor.

It localises to the cytoplasm. It is found in the cytoskeleton. The protein localises to the cell projection. The protein resides in the cilium. Its subcellular location is the cilium axoneme. The enzyme catalyses (glycyl)(n)-glycyl-L-glutamyl-[protein] + glycine + ATP = (glycyl)(n+1)-glycyl-L-glutamyl-[protein] + ADP + phosphate + H(+). In terms of biological role, polyglycylase which modifies both tubulin and non-tubulin proteins, generating polyglycine side chains of variable lengths on the gamma-carboxyl groups of specific glutamate residues of target proteins. Involved in the elongation step rather than the initiation step of the polyglycylation reaction. Polyglycylates alpha-tubulin and beta-tubulin. Polyglycylates non-tubulin proteins such as nucleosome assembly protein NAP1. The polypeptide is Protein polyglycylase TTLL10 (TTLL10) (Macaca fascicularis (Crab-eating macaque)).